A 747-amino-acid polypeptide reads, in one-letter code: ATPase family gene 2 protein homolog B (747 aa).

The residue at position 1 (Met-1) is an N-acetylmethionine. ATP is bound by residues 234-241 (GPPGVGKT) and 500-507 (GPPGCAKT).

The protein belongs to the AAA ATPase family. AFG2 subfamily. Part of the 55LCC heterohexameric ATPase complex composed at least of AIRIM, AFG2A, AFG2B and CINP. Associates with pre-60S ribosomal particles. In terms of tissue distribution, expressed in neurons; also expressed at lower level in astrocytes, oligodendrocytes and microglia.

The protein resides in the cytoplasm. It is found in the cytoskeleton. It localises to the spindle. Its subcellular location is the nucleus. The catalysed reaction is ATP + H2O = ADP + phosphate + H(+). In the context of 55LCC heterohexameric ATPase complex, the ATPase activity is stimulated by DNA binding and inhibited in presence of RNA. Its function is as follows. ATP-dependent chaperone part of the 55LCC heterohexameric ATPase complex which is chromatin-associated and promotes replisome proteostasis to maintain replication fork progression and genome stability. Required for replication fork progression, sister chromatid cohesion, and chromosome stability. The ATPase activity is specifically enhanced by replication fork DNA and is coupled to cysteine protease-dependent cleavage of replisome substrates in response to replication fork damage. Uses ATPase activity to process replisome substrates in S-phase, facilitating their proteolytic turnover from chromatin to ensure DNA replication and mitotic fidelity. Plays an essential role in the cytoplasmic maturation steps of pre-60S ribosomal particles by promoting the release of shuttling protein RSL24D1/RLP24 from the pre-ribosomal particles. This Rattus norvegicus (Rat) protein is ATPase family gene 2 protein homolog B (Afg2b).